The chain runs to 5801 residues: MLTHDLTKNLGRPSFLPKELTISDSQVQRLKTPCFEEIIRSFLNKRKPKQNWQLSLEIEEKLSNPTILDIFKTIRTTEETIISDESSRDFFIYSLLKIDCCIKGNLFSYYSEMDRTNIKDIIIGKGLKNNNNNIILGNSIFFKKIVEDFLTMAFERFSWYCENKSTDLLFFICVMSESNERLKEFFNKFQDYHHHHNQSKTAEHYKISKSLNSLPFSISNGVISNGVNPTIKIQWFLKFVELNLKNPIVYQLFDYTIINYPFISNLNILVGPILLNIFNNDNIKIYEDNNNNNNNNNNNNNNNNNNNSTIVDKFNLTLELKSKLAFSVYKRKLAICAVTLPILVLHLQKDPIGFLKYYDEFIKSSPESKSLFNHSISLHLSNDTKKMFNLLPYRNRIDLGWESFIVNKLTTADKINILSTYDETYQDVKAIIICSLNVESYALLSLESKLSDQFLINVFNQQCRLPNNYNFSGVITSFSTIEREYVSRLKNSIEQEAIKKKQLIVKQIEMNSEIYENYFRIVNVMVEALLNQNPSLNSIIECVGTDLGGSLEQDNQYMDTLPNLVLFSHLLRRIATSNLNSSYLLKKDSKGNNRLNLDLSNLAMFYNSKNSFWQEIRGPYDSFLREFIKNLLAKYVEIKSDFKYLDYHYFESLTIILLEMKRRYNCIPSDYRVSNKPVKIVEFKDFIKKFEEKESQYNDLLLVKEYLERKFSFNFSSQFDKNWKTSKRLKLLRQLIKSTKSLYGHYIQDDESIKFLLHFAIVNKTLFFHAIFDYYYLNSSDQTNSKQLNLDQCLKSTREFLKRLIESDSSIQLNDIFKKITEITDINYVREIEPIYNYFKGNGEPYKKELEEQIQKFIDNATFFFGVRKYLPHIEKFIESLDFIVITDFNKKKAKCEEIIKSVFEKNTTIAGANDALILLKSIMKDINFIQLPFFSLNIKDIIEWFSSFTDFKNFNIQVEIASNNYNDSYSAQILDYTLFCRNQFTELVQYSIDSTKDEKPKQMEFSKFFELINQIIPVSGYLSAVNKISSAINNLSNVKVLFKSGNFNEQGTLQNAEMATNSKSKFTSETYNTNNNSTNGSNWWVVSENGFELAQDKLENSYRGIDIFSKFDDDDNNNSNNNNNNNNNNNNNKKIIDNKKTFDTFRIIFKLFKKIHSLHNELYKICHPKFMALQSIQVACDLETLKKEKRHLRNSIKVWKDFISSLPKNLLFLRAPGVSSLYSKLKLTFENKFNNNNNNNNNNIQQQQQQFDLFLNDLVLDLFPSIKYCFYEYPQIINMKLLKNQIESTTNQLLNEKTNSKILIDDEIVSGCFIEKFLKELIRNIKQNLLYIEDDEEEVEEEVGGVEIGQLKNQPIGVPPPNVNKFDLINSFELVNIECNDDLFNSLMELNDSQLPHPSQIFYANSFDADFPFFKCLVEKFSESIFFLIGTPNKKDEFINWMSVHFSNNTMSKLAKVYVISIGDDTHTKDVFSFLSPYSGKNNNIGNTNNSWESFKVLWNKTKVQNGIESLNLVSGGTGTGKSHFIKSEIKAKNGGGGGRNLEIEKPNEHTVLVRPGFIIDPLIKKIKALKDATNFFIHFNISCYADFQEFSQFFYPLISFGYIFGKQDGELCSIPTGCLLTIYVELGDPLGSDYRKNENNTIQSIEYLKYVKTSIPLIFHLSDTEMSKKYLLAEWVSGEAEWRAFAFSSDHCSFYQKATVEMGKDVKLSQYLDYINQMFKRNFPTIDINYLFDKTKYPFRKNFFLMLNERLKFLETYYEFYLVICDHDFQNSNTVLQDSLLTYQELYEVFLVECAQLANPEFSQQKTIWEKPPLITNRSVVKVTKDRSSSSSSSYSGGGSSINNDNISSKQVDFIDLSNNNGLTKSGSKISNYNNQIDRLIESKIKKLPTYITLDKANENIRLFNTKIASSFGIQSRTNIVTDLANQYGFVLTPELSLRLFILNNRIQHHRSMVLTGDTGVGKTMLLIFYSLLINAGLNAIPDIIFEIKEVIIKFARTLEGFSFSQEIVNLNVDFSIDKILLASKEIFNFVPKHLKENNGENNPVQQLQQQNDGDKQQNPQQPQQQQQQQQQQQQQQQQQQQQQQQPKQQQQQQLKHKNSETSSPLFKHQTSFIKEVEEIIVKIVEAYQLIDISRSPSIQDIMKKKRTSPIATYLNNNKTVKLDSLLEQLKEICTIPFKRLFTRIIMNKKISGKDFKAIVNTIIKESNELKKIDQDLKMVVFIDEYNTSCEESLSLINEIFVDGTFDGEYCLPDNIFWIGAMNPLVETVGNAINYTGESLSSSSSGNNLFSSSSSITSSSTDITTSNNYEFVVQETPPPLKQLELDYGSLSVSNESSFCASLIRLNESGIIPAYLNVDLDYPNQVGIDINQMIIIGQKCLRKEKQARTHVSFRDIIRAIDLYQFFVQEIGVEILKTINENENEKISPIQTHWLALICSVSMTYIHRLNPDNRSKMVNAFNEYIGKFSGNNLNSFKKSSSSSNNNNGDYVTEIFKSIICGVSKQTTIPNGVARTESLQLNIFFTLVSIYTCIPICIVGPPGCSKTLSFSIVNDNLNSHGPTSNRPKLYSFLKSTQPFRYQCNNHTSDTEIKEVLDKAIRRGDIITDRVRMVVHLDEAGLVNENTSPMKIMHDYLDKGTRSKTLITIIILSNKILDAAKTNRMLLLVHPKEVSIQDQHSLVKGCLFGRIDKLTDYEENICTALCNAFSEINTHDSSSLQDIDNSNINNINKNNGNTISDISDIHPKLNKRIFAQRDFVFFLRHLRRAFEIKGKLTPEDLLVSLERNFIGTKIFKPHLQSFFKHLGFESDQLLAHDNTIVRIKQSLQDKLDINTDINSQGFRYMMLLDPTDSETSLLILKEIGVEHTVIRVGDFENDQTTESLSHTVSEIKIKMSQGGTVVLVNSQSIQACFYDVFNRYFTIYQQDDEKSFLAHLSFGINSMFCPVHPDFRVIVHLPLSRLNVTQYPWLNRFEKYILSMDQLLSYSLSKASLENIQNYHDHQSNTKAFFKNLLVSAQDFVDEIHIGKLNGSLLFGYTKSTIQSLVYQAFKDNSNFSPYSISKEDLKKMSLLPPDQQINPSTLLNLKLLQIARPESLYKCTKSLPKSYVEQYLSNQEHFNVYLFLKNLVESFSKNQNQQQQQQQQQELEVDSEQQQQQQQQQQQQQQQQQQQQQQQQQQQQQQQQQQQQQQQQSKWMVFTRTSFSLHSIRDSDKNDKFLLLLESNIKVNRNGGSKNLFKVLQLHTFKSKVKCSKEIIDFCTSEEQMVIIIIADMLVVTNNQINFVHEVFDQHANRANKLLVFISHFPPEFSISSQNNINSIFLNNTEYIYIDSLGIKIDNSLISDSGIKSDLEKSNNNNNNNNNDNSGNNSGNEIDGSSNGDNNNNNNNNNNSGEMKFDIRGWISKVYGITDNKPLDETTFLESMFFKYLYQISSSMANSQLMGYIEPKELRVEESQFYSNATKRVEYIKTIFENNNSWVKCIIDQFLKTWNGTNLITNIIADVSSDIVSTKSTQSFFESIISSIKSFFYPVISQIIKHLINHYSFLSIYEVKPNSMEQKMVEKFIISANSLKISDSVEERFEPIRILPPIIRKVRSELLLYDSISTVINQLFDQALSTCKFMSNYGFLYKEFYQLVSKHPIKPLLDYIVSEEPLLERFNNDFIIRTLKFEKTVSKFFFNLIDSFKGRFVTSSSSPSSSSKKDNINSHPILELWVTSHFEHRTLFYLKNILLPIINLKGVDLISELLKIPLNNNINRTIEDYKRLIVDFSFNLLYNRLLVLLDQVKCNDSYNEDIFLNWISVVREVLNISKTISNVLKDLRKISNGSNNDDSYLKAIQVFISYSILMDSCINSINFIKNEDGTISTTPKNTTKSSSPSVSTLHSMVKIYYNFFNKEFKSDSFNVLFNNLIEFKKEKESKLIGDSYSSILQKTCLLDILDPIATLSRENFSQFLRVLQDPKRNNKIEIPIGWICSVIGEYINLEDNYQFLREKVNEICCKSCEEYYFPPLVSKPTGLSFKFLGITEKSYIHSFKLLEDSIYYAELNRIKSEELNSLCSSHLREKFLREPFSNIILESINTQIIEKFADLLNSNIENAKEVLEKTKILKGTLQSILVAPENPNGKILKLINFYHMTLINHLKESTMATLLRDEAFLSTFGLRLHLLDSDKISGVDASQRGVNLSNKTEVDFSQLRFIYDSSNNSYGVLFKKIEQLINSSDKPEFEKLTETLNTPDCQGLFRASLFIILYQYYLDGLDCSAFKYLFESKEQDSTRKFFDLQNFTEYYLPFIYPDQKLNKNIGVHKLLMRQENKEREDITAAQITINSIAISIGSNSNTFLYNLTRHIQTVAGQYFPACDVGNIFRDCAMIYLDGQDDHTVTMGYDVLYKYIVSCCSWSAFTFTVSVQPRYTEYLLKPQIHFVSKLDKKDHVSLTNYLWNRALTSINEIIRNPELSSSLIEPSQYISEFLYQIWLDGHTLNNSQQTQHFRSHFANTTQVTNYEKYLCNVLTKIKKENESRKSHLMRIFAQRTIVSSKNKEIQMNINSIRSDFVRSYERPYFTFEKINQFCSSSNGSSKNFEVLTFMSNQIQKICLSKHFTPLVNFIVLFHQFLKFRLQENQFNFNFNQCVQILLDKQYETEESIKPLRLAWTHFTNAWKSVIKEMNIIEGGCAQKPEYEKVAFPIHDETPMSVILFDSDSNGSGVILNLINGWVSHTQSPCLNLRNDVPMSPLFKTIAEGFIPKGVTYDISDLPEGENYLLLGSDFEPNDYHQFIYRLFSQYQTFDKETMSPDFLSIQNRVINRFFAGKGVAGILENYSKRFPFQKVISEQDSVVKKKLASLLLDDEIQSLSNLVRNLYSLIQKLPEIYFKDIGHSYLKIHFENTLSARQNYLDDFSQELSTLVSNIINLTNEQQSIDVNQSIFHFRNSITTFVPLDLAKQLSINMVGTISIMLINSSLKQKKLYRNFCPEPKIIDGKYIEFFDRFKSNIIEKAKNEADNLNFLRNLCEYIREVHSKLVSNDVLKEISVSTSESITLAQIIQKRIPEFSFDKEVISKKSFCLNGTPTSYYRILIKTITDIYNHINPMIQNKKNTVYSEIFTNHFNSINSEEEIKQINIDSIRTSNNSSPNLIQKINEQLDNNNNNNNNNNNNNNNNNNNIDHGDDNNDGESESDIEDYENINSTCGKIKIIKNTTRKIDQIDNHPFKHYLYYWIRYLSQFCELLNVEPLNNYNNNNNDFKIFSLFKLFKLQSFEQNYDQNSPIIINRLDKKLSKGLITSISPMETMIHILNRLSKLDSNIKQLFNWKFKIICDECKENTESSGFIKLTLDLTNINETNRSIKSLLMSTLLYSIKIRNCNHNKSDIKLVESPEYIFIEVERFKKGLPFNSSIINFEKNISISELLGNFSKDINGLYNIQSILSYGSRNDEFDFITSNEGQYYHLTSSSCVKTLNEYSFNAIIESLNNNCNFIILKKGGYIKTSHISDPVDPSLLNKPPIPSSDNEEEEEDDDDDEVNEDEYENGNEDEDEDEDEDEDEDEDEDEDEDEDEDEDEDEDEDEDEDEDEDEEYEDEDEDEDIIGDDAEVEKENKNGFSHLESLQITPIPHDKDEEQPEKPQQQEIHQQPEKPQQPEKPQELQSTETPGQEVSVDYKILYDRKAFKEFLYGGFEKFTEDLKLQILDAGINCFSVLLNLKSEDWSKFSFLQLPKRNQLVNSYKKIHNEAIKKEYPFESPFDIDDQKAYEQFLKDIVNDEKTIMDLVEAGFDSFTSLIPSDDGGWEEVSLNLQEILKPATCFNLINQLKLVGKA.

Disordered regions lie at residues 1114–1136 (DDDN…NKKI), 1827–1846 (KDRS…SINN), 2040–2109 (NNGE…SPLF), 3351–3392 (EKSN…NNSG), 5134–5168 (DNNN…SESD), 5478–5573 (ISDP…EDII), and 5600–5638 (HDKD…ETPG). Composition is skewed to low complexity over residues 1118–1134 (NNSN…NNNK), 1831–1846 (SSSS…SINN), 2048–2096 (QQLQ…QQQQ), 3353–3392 (SNNN…NNSG), and 5135–5153 (NNNN…NNNN). The span at 5496–5573 (DNEEEEEDDD…EDEDEDEDII (78 aa)) shows a compositional bias: acidic residues. Positions 5617-5629 (QQPEKPQQPEKPQ) are enriched in basic and acidic residues.

This is an uncharacterized protein from Dictyostelium discoideum (Social amoeba).